The chain runs to 180 residues: Colicin-E5 (180 aa).

Disordered stretches follow at residues 24–143 (AQTD…GSPG) and 155–180 (VTQISDKTDPGWVDDSRIQWGNKNDQ). Over residues 54 to 76 (ESRKKKEDNKRDAEGKLNDELAK) the composition is skewed to basic and acidic residues. Residues 74–180 (LAKNKGKIPG…RIQWGNKNDQ (107 aa)) form a nuclease region. A compositionally biased stretch (polar residues) spans 106 to 116 (NTVSNGATGTS). Over residues 160–171 (DKTDPGWVDDSR) the composition is skewed to basic and acidic residues.

The protein belongs to the colicin/pyosin nuclease family.

Functionally, colicins are polypeptide toxins produced by and active against E.coli and closely related bacteria. This colicin is an endonuclease. The sequence is that of Colicin-E5 (col) from Escherichia coli.